The sequence spans 259 residues: Phosphatidylglycerol--prolipoprotein diacylglyceryl transferase (259 aa).

The next 4 helical transmembrane spans lie at 12-32, 41-61, 80-100, and 109-129; these read LAIH…VYLA, ISSD…IVGA, IIAI…GALV, and VLNP…AQAI. Arginine 131 contributes to the a 1,2-diacyl-sn-glycero-3-phospho-(1'-sn-glycerol) binding site. 3 helical membrane-spanning segments follow: residues 167 to 187, 194 to 214, and 226 to 246; these read IPTF…IMMW, LLDG…RLVI, and GIRI…IFVI.

Belongs to the Lgt family.

It localises to the cell membrane. It carries out the reaction L-cysteinyl-[prolipoprotein] + a 1,2-diacyl-sn-glycero-3-phospho-(1'-sn-glycerol) = an S-1,2-diacyl-sn-glyceryl-L-cysteinyl-[prolipoprotein] + sn-glycerol 1-phosphate + H(+). The protein operates within protein modification; lipoprotein biosynthesis (diacylglyceryl transfer). Functionally, catalyzes the transfer of the diacylglyceryl group from phosphatidylglycerol to the sulfhydryl group of the N-terminal cysteine of a prolipoprotein, the first step in the formation of mature lipoproteins. This Streptococcus pyogenes serotype M49 (strain NZ131) protein is Phosphatidylglycerol--prolipoprotein diacylglyceryl transferase.